The following is a 213-amino-acid chain: N-(5'-phosphoribosyl)anthranilate isomerase (213 aa).

Belongs to the TrpF family.

The enzyme catalyses N-(5-phospho-beta-D-ribosyl)anthranilate = 1-(2-carboxyphenylamino)-1-deoxy-D-ribulose 5-phosphate. It functions in the pathway amino-acid biosynthesis; L-tryptophan biosynthesis; L-tryptophan from chorismate: step 3/5. The chain is N-(5'-phosphoribosyl)anthranilate isomerase from Methanocella arvoryzae (strain DSM 22066 / NBRC 105507 / MRE50).